The sequence spans 225 residues: UPF0758 protein Sputw3181_0338 (225 aa).

One can recognise an MPN domain in the interval 102–224 (VLTNPDLTRD…IVSFAERGWI (123 aa)). Zn(2+)-binding residues include H173, H175, and D186. Positions 173-186 (HNHPSGIAEPSQAD) match the JAMM motif motif.

It belongs to the UPF0758 family.

The chain is UPF0758 protein Sputw3181_0338 from Shewanella sp. (strain W3-18-1).